We begin with the raw amino-acid sequence, 1119 residues long: DNA-directed RNA polymerase subunit beta (1119 aa).

This sequence belongs to the RNA polymerase beta chain family. The RNAP catalytic core consists of 2 alpha, 1 beta, 1 beta' and 1 omega subunit. When a sigma factor is associated with the core the holoenzyme is formed, which can initiate transcription.

It catalyses the reaction RNA(n) + a ribonucleoside 5'-triphosphate = RNA(n+1) + diphosphate. In terms of biological role, DNA-dependent RNA polymerase catalyzes the transcription of DNA into RNA using the four ribonucleoside triphosphates as substrates. The sequence is that of DNA-directed RNA polymerase subunit beta from Thermus thermophilus (strain ATCC BAA-163 / DSM 7039 / HB27).